The chain runs to 681 residues: MRQPLLKLAAVTRRFPAGDKDVVVLNNVNLSIGAGEIVAIVGASGSGKSTLMNILGCLDHPSEGTYTVGGRDTHMLDSDELAQLRREHFGFVFQRYHLLPHVDAVANLEMPAIYAGTPRADRHARARELLARLGLADRAHHRPGQLSGGQQQRVSIARALMNGGQVILADEPTGALDTKSGQDVIRILHELNALGHTIVIVTHDKAVARHARRIIEISDGEIVADRPNRHYAEAFAEVGVGAAATTETAADTRSAPASGDAPPPANNDTAADPAPAPDASPPAPAVSPKHAGWRGSRSCRTGCARCLTMLGIIIGITSVVSIVAVGEGAKRYMLEEIGSIGTNTISLYPGSDWGDSRADTIQTLVPADVAALAEQPYVDSATPETSRTLLLRYRNVDVHALVSGVGDSYFQTRGMRFALGVPFDDDAVRRQAQVAVIDQNTRRKLFGATRNPVGEAILVDNVPCVVIGVTADKKSAFGSVKSLNVWVPYTTASGRLFGQRYLDSITVRVRDGQPSAAAEKSLEKLMIQRHGRKDFFTYNMDSVVKTVEKTGQSLTLLLSLIAVISLVVGGIGVMNIMLVSVTERTREIGIRMAVGARQSDILQQFLVEAVLVCLLGGTIGIALSFGLGALFSVFVAQWKMVFSAGAIVTAFVCSTLTGVIFGFMPARNASRLDPIDALARD.

One can recognise an ABC transporter domain in the interval 6-244 (LKLAAVTRRF…FAEVGVGAAA (239 aa)). 42–49 (GASGSGKS) provides a ligand contact to ATP. Positions 246–273 (TETAADTRSAPASGDAPPPANNDTAADP) are enriched in low complexity. The segment at 246 to 298 (TETAADTRSAPASGDAPPPANNDTAADPAPAPDASPPAPAVSPKHAGWRGSRS) is disordered. Residues 274–285 (APAPDASPPAPA) are compositionally biased toward pro residues. 4 helical membrane-spanning segments follow: residues 306–326 (CLTM…VAVG), 554–574 (LTLL…IGVM), 611–631 (LVCL…GALF), and 644–664 (AGAI…FGFM).

It belongs to the ABC transporter superfamily. Macrolide exporter (TC 3.A.1.122) family. As to quaternary structure, homodimer.

It localises to the cell inner membrane. In terms of biological role, non-canonical ABC transporter that contains transmembrane domains (TMD), which form a pore in the inner membrane, and an ATP-binding domain (NBD), which is responsible for energy generation. Confers resistance against macrolides. The sequence is that of Macrolide export ATP-binding/permease protein MacB from Burkholderia orbicola (strain AU 1054).